The following is a 574-amino-acid chain: Enolase 4 (574 aa).

Residues 165-175 (EKERRQMEREA) show a composition bias toward basic and acidic residues. The interval 165–221 (EKERRQMEREASPMPLQPEPSPVTSPAPGKKKGSGKGKKAAVVEKPIPPEETPEAVV) is disordered. The span at 179–189 (PLQPEPSPVTS) shows a compositional bias: pro residues. The segment covering 193–203 (GKKKGSGKGKK) has biased composition (basic residues). Glu-287 is a binding site for substrate. Lys-467 (proton acceptor) is an active-site residue. Lys-518 lines the substrate pocket.

This sequence belongs to the enolase family.

The enzyme catalyses (2R)-2-phosphoglycerate = phosphoenolpyruvate + H2O. It participates in carbohydrate degradation; glycolysis; pyruvate from D-glyceraldehyde 3-phosphate: step 4/5. In Xenopus tropicalis (Western clawed frog), this protein is Enolase 4 (eno4).